The primary structure comprises 527 residues: Bifunctional purine biosynthesis protein PurH (527 aa).

Residues 1 to 149 (MASDFLPVRR…KNFARVAVAT (149 aa)) form the MGS-like domain.

It belongs to the PurH family.

The enzyme catalyses (6R)-10-formyltetrahydrofolate + 5-amino-1-(5-phospho-beta-D-ribosyl)imidazole-4-carboxamide = 5-formamido-1-(5-phospho-D-ribosyl)imidazole-4-carboxamide + (6S)-5,6,7,8-tetrahydrofolate. It catalyses the reaction IMP + H2O = 5-formamido-1-(5-phospho-D-ribosyl)imidazole-4-carboxamide. The protein operates within purine metabolism; IMP biosynthesis via de novo pathway; 5-formamido-1-(5-phospho-D-ribosyl)imidazole-4-carboxamide from 5-amino-1-(5-phospho-D-ribosyl)imidazole-4-carboxamide (10-formyl THF route): step 1/1. It participates in purine metabolism; IMP biosynthesis via de novo pathway; IMP from 5-formamido-1-(5-phospho-D-ribosyl)imidazole-4-carboxamide: step 1/1. This is Bifunctional purine biosynthesis protein PurH from Xanthomonas euvesicatoria pv. vesicatoria (strain 85-10) (Xanthomonas campestris pv. vesicatoria).